The primary structure comprises 129 residues: Small ribosomal subunit protein uS11 (129 aa).

It belongs to the universal ribosomal protein uS11 family. Part of the 30S ribosomal subunit. Interacts with proteins S7 and S18. Binds to IF-3.

Its function is as follows. Located on the platform of the 30S subunit, it bridges several disparate RNA helices of the 16S rRNA. Forms part of the Shine-Dalgarno cleft in the 70S ribosome. This chain is Small ribosomal subunit protein uS11, found in Psychrobacter arcticus (strain DSM 17307 / VKM B-2377 / 273-4).